The following is a 430-amino-acid chain: RNA polymerase-associated protein LEO1 (430 aa).

Over residues 1–10 (MSSSEGNSDA) the composition is skewed to polar residues. The interval 1-128 (MSSSEGNSDA…SRGSLNDLQG (128 aa)) is disordered. Low complexity predominate over residues 18–30 (KSSTPSSRGSSPD). Positions 99–119 (REGKPKESNTRARLSDSDAES) are enriched in basic and acidic residues. Coiled-coil stretches lie at residues 326–347 (TRRE…RTQM) and 409–429 (EEYR…DEES). Positions 349–430 (RNNFKVRGPR…QIVTSDEESD (82 aa)) are disordered.

Belongs to the LEO1 family. As to quaternary structure, component of the PAF1 complex which consists of at least cdc-73, ctr-9, leo-1, pafo-1 and rtfo-1.

The protein localises to the nucleus. It localises to the cytoplasm. Functionally, component of the PAF1 complex which is a multifunctional complex involved in transcription initiation via genetic interactions with TATA-binding proteins, elongation and transcription-coupled histone modification. The sequence is that of RNA polymerase-associated protein LEO1 from Caenorhabditis elegans.